Here is a 471-residue protein sequence, read N- to C-terminus: Elongation factor 1-alpha (471 aa).

Residues lysine 10 to glutamate 239 form the tr-type G domain. Residues glycine 19–serine 26 form a G1 region. Glycine 19–serine 26 serves as a coordination point for GTP. The G2 stretch occupies residues glycine 75 to threonine 79. A G3 region spans residues aspartate 96–glycine 99. GTP-binding positions include aspartate 96–histidine 100 and asparagine 156–aspartate 159. Positions asparagine 156 to aspartate 159 are G4. Residues serine 196–phenylalanine 198 are G5.

This sequence belongs to the TRAFAC class translation factor GTPase superfamily. Classic translation factor GTPase family. EF-Tu/EF-1A subfamily. In terms of assembly, component of the eukaryotic elongation factor 1 complex (eEF1).

The protein resides in the cytoplasm. Its pathway is protein biosynthesis; polypeptide chain elongation. In terms of biological role, GTP-binding component of the eukaryotic elongation factor 1 complex (eEF1). In its active GTP-bound form, binds to and delivers aminoacyl-tRNA to the A-site of ribosomes during protein biosynthesis. In the presence of a correct codon-anticodon match between the aminoacyl-tRNA and the A-site codon of the ribosome-bound mRNA, the ribosome acts as a GTPase activator and the GTP is hydrolyzed. The inactive GDP-bound form leaves the ribosome and must be recycled by its guanine nucleotide exchange factor (GEF) (eEF1B subcomplex) before binding another molecule of aminoacyl-tRNA. Required for nuclear export of aminoacyl-tRNAs. May also be involved in translational quality control by targeting cotranslationally damaged proteins to the proteasome. In Encephalitozoon cuniculi (strain GB-M1) (Microsporidian parasite), this protein is Elongation factor 1-alpha (TEF1).